The primary structure comprises 152 residues: Ribosomal RNA large subunit methyltransferase H (152 aa).

S-adenosyl-L-methionine is bound by residues L69, G96, and 118-123; that span reads FGKLTF.

The protein belongs to the RNA methyltransferase RlmH family. As to quaternary structure, homodimer.

It localises to the cytoplasm. The catalysed reaction is pseudouridine(1915) in 23S rRNA + S-adenosyl-L-methionine = N(3)-methylpseudouridine(1915) in 23S rRNA + S-adenosyl-L-homocysteine + H(+). Specifically methylates the pseudouridine at position 1915 (m3Psi1915) in 23S rRNA. This chain is Ribosomal RNA large subunit methyltransferase H, found in Mesomycoplasma hyopneumoniae (strain 232) (Mycoplasma hyopneumoniae).